The sequence spans 468 residues: Pancreatic lipase-related protein 2 (468 aa).

The signal sequence occupies residues 1–16 (MLLCWIVSLLLATVGG). C20 and C26 form a disulfide bridge. The tract at residues 92–104 (VHGFIDKGEDGWL) is required for galactolipase activity. C108 and C119 are disulfide-bonded. S170 acts as the Nucleophile in catalysis. The active-site Charge relay system is D194. Ca(2+) contacts are provided by E205, R208, D210, and D213. A disulfide bond links C255 and C279. The tract at residues 256 to 278 (QKNILSTIVDINGIWEGTQNFVA) is required for galactolipase activity. H281 functions as the Charge relay system in the catalytic mechanism. Intrachain disulfides connect C303–C314 and C317–C322. N-linked (GlcNAc...) asparagine glycans are attached at residues N352 and N427. One can recognise a PLAT domain in the interval 356–468 (WRYKVSVTLS…EDVLQSLYPC (113 aa)). Cysteines 452 and 468 form a disulfide.

The protein belongs to the AB hydrolase superfamily. Lipase family. In terms of tissue distribution, expressed in pancreatic acinar cells (at protein level).

The protein localises to the secreted. Its subcellular location is the zymogen granule membrane. It localises to the cell projection. It is found in the neuron projection. The enzyme catalyses a triacylglycerol + H2O = a diacylglycerol + a fatty acid + H(+). It catalyses the reaction a 1,2-diacyl-3-O-(beta-D-galactosyl)-sn-glycerol + 2 H2O = 3-beta-D-galactosyl-sn-glycerol + 2 a fatty acid + 2 H(+). It carries out the reaction 1,2,3-tri-(9Z-octadecenoyl)-glycerol + H2O = di-(9Z)-octadecenoylglycerol + (9Z)-octadecenoate + H(+). The catalysed reaction is di-(9Z)-octadecenoylglycerol + H2O = (9Z-octadecenoyl)-glycerol + (9Z)-octadecenoate + H(+). The enzyme catalyses (9Z-octadecenoyl)-glycerol + H2O = glycerol + (9Z)-octadecenoate + H(+). It catalyses the reaction 1-(9Z-octadecenoyl)-glycerol + H2O = glycerol + (9Z)-octadecenoate + H(+). It carries out the reaction 1,2,3-tripropanoylglycerol + H2O = dipropanoylglycerol + propanoate + H(+). The catalysed reaction is 1,2,3-tributanoylglycerol + H2O = dibutanoylglycerol + butanoate + H(+). The enzyme catalyses 1,2,3-trioctanoylglycerol + H2O = dioctanoylglycerol + octanoate + H(+). It catalyses the reaction 1,2-didecanoylglycerol + H2O = decanoylglycerol + decanoate + H(+). It carries out the reaction long chain 1,2-diacyl-3-O-beta-D-galactosyl-sn-glycerol + H2O = long chain acyl-3-O-beta-D-galactosyl-sn-glycerol + a fatty acid + H(+). The catalysed reaction is 1,2-dioctanoyl-3-O-beta-D-galactosyl-sn-glycerol + H2O = octanoyl-3-(beta-D-galactosyl)-sn-glycerol + octanoate + H(+). The enzyme catalyses 1,2-didodecanoyl-3-beta-D-galactosyl-sn-glycerol + H2O = dodecanoyl-3-beta-D-galactosyl-sn-glycerol + dodecanoate + H(+). It catalyses the reaction 1-beta-D-galactosyl-2,3-didodecanoyl-sn-glycerol + H2O = 1-beta-D-galactosyl-dodecanoyl-sn-glycerol + dodecanoate + H(+). It carries out the reaction a 1,2-diacyl-3-O-[alpha-D-galactosyl-(1-&gt;6)-beta-D-galactosyl]-sn-glycerol + H2O = acyl-3-O-[alpha-D-galactosyl-(1-&gt;6)-beta-D-galactosyl]-sn-glycerol + a fatty acid + H(+). The catalysed reaction is long chain 1,2-diacyl-3-O-[alpha-D-galactosyl-(1-&gt;6)-beta-D-galactosyl]-sn-glycerol + H2O = long chain acyl-3-O-[alpha-D-galactosyl-(1-&gt;6)-beta-D-galactosyl]-sn-glycerol + a fatty acid + H(+). The enzyme catalyses 1,2-dioctanoyl-3-O-[alpha-D-galactosyl-(1-&gt;6)-beta-D-galactosyl]-sn-glycerol + H2O = octanoyl-3-O-[alpha-D-galactosyl-(1-&gt;6)-beta-D-galactosyl]-sn-glycerol + octanoate + H(+). It catalyses the reaction 1,2-didodecanoyl-3-O-[alpha-D-galactosyl-(1-&gt;6)-beta-D-galactosyl]-sn-glycerol + H2O = dodecanoyl-3-O-[alpha-D-galactosyl-(1-&gt;6)-beta-D-galactosyl]-sn-glycerol + dodecanoate + H(+). It carries out the reaction a 1,2-diacyl-sn-glycero-3-phosphocholine + H2O = a monoacyl-sn-glycero-3-phosphocholine + a fatty acid + H(+). It participates in glycerolipid metabolism; triacylglycerol degradation. Its pathway is glycolipid metabolism. CLPS stimulates triacylglycerol lipase activity. Triacylglycerol lipase activity is not inhibited by increasing bile salt concentration. Functionally, lipase that primarily hydrolyzes triglycerides and galactosylglycerides. In neonates, may play a major role in pancreatic digestion of dietary fats such as milk fat globules enriched in long-chain triglycerides. Hydrolyzes short-, medium- and long-chain fatty acyls in triglycerides without apparent positional specificity. Can completely deacylate triacylglycerols. When the liver matures and bile salt synthesis increases, likely functions mainly as a galactolipase and monoacylglycerol lipase. Hydrolyzes monogalactosyldiglycerols (MGDG) and digalactosyldiacylglycerols (DGDG) present in a plant-based diet, releasing long-chain polyunsaturated fatty acids. Hydrolyzes medium- and long-chain fatty acyls in galactolipids. May act together with LIPF to hydrolyze partially digested triglycerides. Hydrolyzes long-chain monoglycerides with high efficiency. In cytotoxic T cells, contributes to perforin-dependent cell lysis, but is unlikely to mediate direct cytotoxicity. Also has low phospholipase activity. In neurons, required for the localization of the phospholipid 1-oleoyl-2-palmitoyl-PC (OPPC) to neurite tips through acyl chain remodeling of membrane phospholipids. The resulting OPPC-rich lipid membrane domain recruits the t-SNARE protein STX4 by selectively interacting with the STX4 transmembrane domain and this promotes surface expression of the dopamine transporter SLC6A3/DAT at neurite tips by facilitating fusion of SLC6A3-containing transport vesicles with the plasma membrane. This Rattus norvegicus (Rat) protein is Pancreatic lipase-related protein 2.